The primary structure comprises 435 residues: Ras association domain-containing protein 9 (435 aa).

Positions 1 to 22 (MAPFGRNLLKTRHKNRSPTKDM) are disordered. The 95-residue stretch at 25–119 (EEKEIVVWVC…MQFVLVKADA (95 aa)) folds into the Ras-associating domain. The stretch at 195-290 (HTIHQQVKRM…DKLSAEIEKE (96 aa)) forms a coiled coil. The tract at residues 380-435 (NRAKESEVPSSNGEIPPFTQRVFSNYTNDTDSDTGISSNHSQDSETTVGDVVLLST) is disordered. Residues 400–426 (RVFSNYTNDTDSDTGISSNHSQDSETT) show a composition bias toward polar residues.

Interacts with PAM.

It localises to the endosome. Functionally, may play a role in regulating vesicuar trafficking in cells. The chain is Ras association domain-containing protein 9 (RASSF9) from Homo sapiens (Human).